The sequence spans 561 residues: Sensor histidine kinase BtsS (561 aa).

The Cytoplasmic segment spans residues 1–3 (MYD). The chain crosses the membrane as a helical span at residues 4–24 (FNLVLLLLQQMCVFLVIAWLM). Topologically, residues 25–43 (SKTPLFIPLMQVTVRLPHK) are periplasmic. Residues 44 to 64 (FLCYIVFSIFCIMGTWFGLHI) traverse the membrane as a helical segment. At 65 to 72 (DDSIANTR) the chain is on the cytoplasmic side. Residues 73-93 (AIGAVMGGLLGGPVVGGLVGL) traverse the membrane as a helical segment. Residues 94-108 (TGGLHRYSMGGMTAL) are Periplasmic-facing. Residues 109-129 (SCMISTIVEGLLGGLVHSILI) traverse the membrane as a helical segment. Residues 130–140 (RRGRTDKVFNP) are Cytoplasmic-facing. The helical transmembrane segment at 141 to 161 (ITAGAVTFVAEMVQMLIILAI) threads the bilayer. The Periplasmic segment spans residues 162–170 (ARPYEDAVR). A helical membrane pass occupies residues 171-191 (LVSNIAAPMMVTNTVGAALFM). Topologically, residues 192 to 561 (RILLDKRAMF…TLRLPWRDEA (370 aa)) are cytoplasmic. Residues 354 to 559 (QILAGQYERQ…RITLRLPWRD (206 aa)) enclose the Histidine kinase domain.

Post-translationally, autophosphorylated.

The protein resides in the cell inner membrane. It carries out the reaction ATP + protein L-histidine = ADP + protein N-phospho-L-histidine.. Member of the two-component regulatory system BtsS/BtsR. BtsS is a high-affinity receptor for extracellular pyruvate that activates BtsR by phosphorylation. This is Sensor histidine kinase BtsS from Escherichia coli O6:H1 (strain CFT073 / ATCC 700928 / UPEC).